Reading from the N-terminus, the 293-residue chain is Histone H3-like centromeric protein CSE4 (293 aa).

Residues 132–141 (QDLSYDESDY) show a composition bias toward acidic residues. A disordered region spans residues 132–169 (QDLSYDESDYSDPLQEIDSNYRESPRRTTDKILKSSSK). Basic and acidic residues predominate over residues 150-164 (SNYRESPRRTTDKIL). Residues 157-291 (RRTTDKILKS…VQLARRIRGQ (135 aa)) form an H3-like region.

This sequence belongs to the histone H3 family. In terms of assembly, component of centromeric nucleosomes, where DNA is wrapped around a histone octamer core. The octamer contains two molecules each of H2A, H2B, CSE4/CENPA and H4 assembled in one CSE4-H4 heterotetramer and two H2A-H2B heterodimers. Interacts with the inner kinetochore. Post-translationally, ubiquitinated. Is degraded through ubiquitin-mediated proteolysis when not protected by its association to the kinetochore.

It localises to the nucleus. Its subcellular location is the chromosome. It is found in the centromere. In terms of biological role, histone H3-like nucleosomal protein that is specifically found in centromeric nucleosomes. Replaces conventional H3 in the nucleosome core of centromeric chromatin that serves as an assembly site for the inner kinetochore. Required for recruitment and assembly of kinetochore proteins, mitotic progression and chromosome segregation. May serve as an epigenetic mark that propagates centromere identity through replication and cell division. This is Histone H3-like centromeric protein CSE4 (CSE4) from Monosporozyma servazzii (Yeast).